A 271-amino-acid chain; its full sequence is Putative phosphoenolpyruvate synthase regulatory protein (271 aa).

An ADP-binding site is contributed by 151–158 (GVSRSGKT).

Belongs to the pyruvate, phosphate/water dikinase regulatory protein family. PSRP subfamily.

The catalysed reaction is [pyruvate, water dikinase] + ADP = [pyruvate, water dikinase]-phosphate + AMP + H(+). The enzyme catalyses [pyruvate, water dikinase]-phosphate + phosphate + H(+) = [pyruvate, water dikinase] + diphosphate. In terms of biological role, bifunctional serine/threonine kinase and phosphorylase involved in the regulation of the phosphoenolpyruvate synthase (PEPS) by catalyzing its phosphorylation/dephosphorylation. The polypeptide is Putative phosphoenolpyruvate synthase regulatory protein (Burkholderia thailandensis (strain ATCC 700388 / DSM 13276 / CCUG 48851 / CIP 106301 / E264)).